Here is a 1861-residue protein sequence, read N- to C-terminus: MNKKLFTNRFISFNMSLLLVLTAVFSSIPLHSVHAADNASVVANIVGEFQDQLGDSNWNIDSNITIMQYMGNGLYEFTTPTQLKAGSYQYKVALNHSWDGGGVPSQGNLTLNLANDSYVTFWFDYNTQSVTDSTKYTPIANDKLPRLVGTIQSAIGAGNDWKPETSTAIMTDDNFDNVYSYTAHVPKGDYQYKVTLGNTWDENYGANGVKDGSNIQINVTNDADITFYYDANTHNIWTNYSPILTGLDNNIYYDDLKHDTHDSFFRNPFGAVKVDQTVTLRIQAKNHDLESARISYWDDINKIRIELPMTRIGESPDGNFEYWEIKLSFDHPTRIWYYFILKDGTKTAYYGDNDDQLGGVGKATDTVNKDFELTVYDKNFDTPDWMKGAVMYQIFPDRFYNGDTSNDHAKTLSRGNDPIEFHNNWNDLPDNPNNAGTPGYTGDGIWSNDFFGDLKGIDDKLDYLKGLGVSVIYLNPIFESPSNHKYDTADYTKIDEMFGTTQDFEKLMSDAHAKGIKIILDGVFNHTSDDSIYFNRYGKYPGLGAYQAWKEGNQSLSPYGDWYTINSDGTYECWWGYDSLPVIKSLNGSEYNVTSWANFIINDENAISKYWLNPDGNLNDGADGWRLDVENEVAHDFWTHFRNAINTVKFEAPMIAENWGDASLDLLGDSFNSVMNYQFRNDIIDFLIGQSFDDGNGQHNPIDAAKLDQRLMSIYERYPLPAFYSTMNLLGSHDTMRILTVFGYNSADPNENSDAAKQLAEQKLKLATILQMGYPGMADIYYGDEAGVSGGKDPDDRRTFPWGNEDTTLQDFFKNISSIRNNNQVLKTGDLETLYAQNDVYAIGRRIINGKDAFGTSYPDSAAIVAINRSKSDKQIAIDTTKFLRDGVTFKDLINNNVSYSISNGQIVIDVPAMSGVMLISDDGQDLTAPQAPSNVVVTSGNGKVDLSWLQSDGATGYNIYRSSVEGGLYEKIASNVTETTFEDANVTNGLKYVYAISAIDELGNESGISNDAVAYPAYPIGWVGNLTQVSDNHIIGVDKPTEDIYAEVWADGLTNSTGQGPNMIAQLGYKYVSGTVYDSVYGSVYNSVYGVDDSGFTWVNAQYVGDIGNNDQYKASFTPDKIGQWEYLMRFSDNQGQDWITTSTLSFYVVPSDDLIKPTAPYLNQPGTESSRVSLTWNPSTDNVGIYDYEIYRSDGGTFNKIATVSNEVYNYIDTSVINGVTYNYKVVAVDLSFNRTESNVVTIKPDVVPIKVIFNVTVPDYTPDAVNLAGTFPNATWDPSAQQMTKIDNNTYSITLTLDEGTQIEYKYARGSWDKVEKDEYGNEFASNRKVTIVNQGNNEMTINDTVYRWRDIPIFIYSPSSNMTVDSNISTMEVKGNTYKGAKVTINGDSFVQDKNGVFTKDVSLNYGVNKIKIHVEPNDGSVYGNDQGRITELTKDIEIDVIRQENNSGSGTGNNNTSTSGSNSSSTGSGSTGSTSITSNISNTSNTSNTIGVITKNGNVITLTLDAGKAKDLIVNSKDKKVVFDITTIGEGQQKVVQISKDILDTSAANGKDIVIKSDNASIALTKDALNQNQIQNGVNVSIKDNGKPNVTNYVSLSNVVDITISGISGNVTLAKPVEVTLNISKANDPRKVAVYYYNPTTNQWEYVGGKVDASSGTITFNATHFSQYAAFEYDKTFNDIKDNWAKDVIEVLASRHIVEGMTDTQYEPNKTVTRAEFTAMILRLLNIKDETYSGEFSDVKSGDWYANAIEAAYKAGIIEGDGKNARPNDSITREEMTAIAMRAYEMLTQYKEENIGATTFSDDKSISDWARNVVANAAKLGIVNGEPNNVFAPKGNATRAEAAAIIYGLLEKSGNI.

The signal sequence occupies residues 1-35 (MNKKLFTNRFISFNMSLLLVLTAVFSSIPLHSVHA). The Ca(2+) site is built by Asp-248, Asn-250, Asp-288, Asp-343, Asn-401, Asp-403, Asn-406, Asp-407, and Asp-453. The substrate site is built by His-526 and Arg-626. The active-site Nucleophile is the Asp-628. Glu-657 functions as the Proton donor in the catalytic mechanism. Residues 733–734 (HD), Asp-793, and Arg-797 contribute to the substrate site. Fibronectin type-III domains follow at residues 929-1021 (APQA…AYPI) and 1158-1252 (KPTA…VVPI). Positions 1246–1354 (KPDVVPIKVI…INDTVYRWRD (109 aa)) constitute a CBM20 domain. The disordered stretch occupies residues 1448–1486 (QENNSGSGTGNNNTSTSGSNSSSTGSGSTGSTSITSNIS). Positions 1450–1486 (NNSGSGTGNNNTSTSGSNSSSTGSGSTGSTSITSNIS) are enriched in low complexity. 3 SLH domains span residues 1677–1740 (EYDK…YSGE), 1741–1799 (FSDV…KEEN), and 1802–1861 (ATTF…SGNI).

The protein belongs to the glycosyl hydrolase 13 family. Ca(2+) is required as a cofactor. Glycosylated.

The protein localises to the secreted. It is found in the cell wall. The enzyme catalyses Endohydrolysis of (1-&gt;4)-alpha-D-glucosidic linkages in polysaccharides containing three or more (1-&gt;4)-alpha-linked D-glucose units.. The catalysed reaction is Hydrolysis of (1-&gt;6)-alpha-D-glucosidic linkages in pullulan, amylopectin and glycogen, and in the alpha- and beta-limit dextrins of amylopectin and glycogen.. The protein is Amylopullulanase (amyB) of Thermoanaerobacterium thermosulfurigenes (Clostridium thermosulfurogenes).